We begin with the raw amino-acid sequence, 297 residues long: Homoserine kinase (297 aa).

An ATP-binding site is contributed by 82–92; it reads PLTRGLGSSAS.

The protein belongs to the GHMP kinase family. Homoserine kinase subfamily.

It is found in the cytoplasm. The catalysed reaction is L-homoserine + ATP = O-phospho-L-homoserine + ADP + H(+). It functions in the pathway amino-acid biosynthesis; L-threonine biosynthesis; L-threonine from L-aspartate: step 4/5. Catalyzes the ATP-dependent phosphorylation of L-homoserine to L-homoserine phosphate. In Bacillus cereus (strain ZK / E33L), this protein is Homoserine kinase.